We begin with the raw amino-acid sequence, 1002 residues long: Eukaryotic translation initiation factor 5B (1002 aa).

Disordered regions lie at residues 1-172 and 184-402; these read MAKK…GLAA and EEQE…NKKD. The span at 13–23 shows a compositional bias: acidic residues; it reads WDEEFEEDAAQ. A compositionally biased stretch (polar residues) spans 27–37; that stretch reads ISATPTPNPES. The span at 47–57 shows a compositional bias: low complexity; sequence EASASAEGAEA. Composition is skewed to basic and acidic residues over residues 75–111 and 120–154; these read KKVI…EQAA and QKEK…ESDK. The segment covering 155 to 172 has biased composition (low complexity); that stretch reads PSASAKKPAKKVPAGLAA. 2 stretches are compositionally biased toward basic and acidic residues: residues 184 to 252 and 267 to 276; these read EEQE…ERRR and AKKDGEENKP. The segment covering 277–287 has biased composition (basic residues); sequence KKVVYSKKKKR. Over residues 297 to 306 the composition is skewed to basic and acidic residues; it reads IKSDSKKDSE. Composition is skewed to acidic residues over residues 307–342 and 352–370; these read VVPD…EETQ and DQNQ…EEEE. Positions 381–398 are enriched in low complexity; sequence STPAATPAATPTPSSASP. A tr-type G domain is found at 403–621; the sequence is LRSPICCILG…LLELTQKRMS (219 aa). S405 carries the post-translational modification Phosphoserine. The tract at residues 412-419 is G1; it reads GHVDTGKT. K(+) is bound at residue D415. Residue D415 participates in Na(+) binding. GTP is bound by residues 415 to 420, Q431, and 437 to 439; these read DTGKTK and GIT. A Mg(2+)-binding site is contributed by T419. G437 is a K(+) binding site. Position 437 (G437) interacts with Na(+). The segment at 437–441 is G2; that stretch reads GITQQ. T439 contributes to the Mg(2+) binding site. Positions 476 to 479 are G3; it reads DTPG. GTP-binding positions include 530–533 and 599–600; these read NKID and AV. The segment at 530–533 is G4; it reads NKID. The G5 stretch occupies residues 598 to 600; it reads SAV.

This sequence belongs to the TRAFAC class translation factor GTPase superfamily. Classic translation factor GTPase family. IF-2 subfamily. The cofactor is Na(+). Requires K(+) as cofactor.

It is found in the cytoplasm. It catalyses the reaction GTP + H2O = GDP + phosphate + H(+). Functionally, plays a role in translation initiation. Translational GTPase that catalyzes the joining of the 40S and 60S subunits to form the 80S initiation complex with the initiator methionine-tRNA in the P-site base paired to the start codon. GTP binding and hydrolysis induces conformational changes in the enzyme that renders it active for productive interactions with the ribosome. The release of the enzyme after formation of the initiation complex is a prerequisite to form elongation-competent ribosomes. Stimulates 20S pre-rRNA cleavage to mature 18S rRNA by PIN-domain endonuclease NOB1. The polypeptide is Eukaryotic translation initiation factor 5B (Saccharomyces cerevisiae (strain ATCC 204508 / S288c) (Baker's yeast)).